Reading from the N-terminus, the 219-residue chain is 3-dehydroquinate dehydratase (219 aa).

3-dehydroquinate contacts are provided by residues 28–30 and Arg61; that span reads ELR. The active-site Proton donor/acceptor is His116. Lys142 functions as the Schiff-base intermediate with substrate in the catalytic mechanism. 3-dehydroquinate contacts are provided by Arg180 and Gln203.

Belongs to the type-I 3-dehydroquinase family. In terms of assembly, homodimer.

It catalyses the reaction 3-dehydroquinate = 3-dehydroshikimate + H2O. Its pathway is metabolic intermediate biosynthesis; chorismate biosynthesis; chorismate from D-erythrose 4-phosphate and phosphoenolpyruvate: step 3/7. In terms of biological role, involved in the third step of the chorismate pathway, which leads to the biosynthesis of aromatic amino acids. Catalyzes the cis-dehydration of 3-dehydroquinate (DHQ) and introduces the first double bond of the aromatic ring to yield 3-dehydroshikimate. The protein is 3-dehydroquinate dehydratase of Aquifex aeolicus (strain VF5).